The following is a 176-amino-acid chain: Urease accessory protein UreE (176 aa).

Positions 134–176 are disordered; the sequence is EAGAYGSGGHHHHGESSQGHAHGPLAPIPVHQKIHRPSDIPSR.

It belongs to the UreE family.

The protein resides in the cytoplasm. Its function is as follows. Involved in urease metallocenter assembly. Binds nickel. Probably functions as a nickel donor during metallocenter assembly. The polypeptide is Urease accessory protein UreE (Nitrosospira multiformis (strain ATCC 25196 / NCIMB 11849 / C 71)).